The sequence spans 349 residues: UDP-3-O-acylglucosamine N-acyltransferase (349 aa).

His242 serves as the catalytic Proton acceptor.

The protein belongs to the transferase hexapeptide repeat family. LpxD subfamily. As to quaternary structure, homotrimer.

It carries out the reaction a UDP-3-O-[(3R)-3-hydroxyacyl]-alpha-D-glucosamine + a (3R)-hydroxyacyl-[ACP] = a UDP-2-N,3-O-bis[(3R)-3-hydroxyacyl]-alpha-D-glucosamine + holo-[ACP] + H(+). Its pathway is bacterial outer membrane biogenesis; LPS lipid A biosynthesis. In terms of biological role, catalyzes the N-acylation of UDP-3-O-acylglucosamine using 3-hydroxyacyl-ACP as the acyl donor. Is involved in the biosynthesis of lipid A, a phosphorylated glycolipid that anchors the lipopolysaccharide to the outer membrane of the cell. This chain is UDP-3-O-acylglucosamine N-acyltransferase, found in Cytophaga hutchinsonii (strain ATCC 33406 / DSM 1761 / CIP 103989 / NBRC 15051 / NCIMB 9469 / D465).